The sequence spans 360 residues: uncharacterized protein (360 aa).

Residues Leu4–Ile235 enclose the ABC transporter domain. Gly37–Ser44 is a binding site for ATP.

It belongs to the ABC transporter superfamily.

This is an uncharacterized protein from Escherichia coli O157:H7.